We begin with the raw amino-acid sequence, 259 residues long: Adenosylcobinamide-GDP ribazoletransferase (259 aa).

6 consecutive transmembrane segments (helical) span residues 9-29 (NLFF…WIEV), 43-63 (LVGL…LYWV), 64-84 (SPSV…GGFH), 118-138 (ALAL…LALF), 143-163 (VSLA…SFIF), and 196-216 (VLAL…GLVI).

The protein belongs to the CobS family. Mg(2+) is required as a cofactor.

The protein localises to the cell inner membrane. It carries out the reaction alpha-ribazole + adenosylcob(III)inamide-GDP = adenosylcob(III)alamin + GMP + H(+). The catalysed reaction is alpha-ribazole 5'-phosphate + adenosylcob(III)inamide-GDP = adenosylcob(III)alamin 5'-phosphate + GMP + H(+). The protein operates within cofactor biosynthesis; adenosylcobalamin biosynthesis; adenosylcobalamin from cob(II)yrinate a,c-diamide: step 7/7. Joins adenosylcobinamide-GDP and alpha-ribazole to generate adenosylcobalamin (Ado-cobalamin). Also synthesizes adenosylcobalamin 5'-phosphate from adenosylcobinamide-GDP and alpha-ribazole 5'-phosphate. The protein is Adenosylcobinamide-GDP ribazoletransferase of Shewanella halifaxensis (strain HAW-EB4).